Reading from the N-terminus, the 346-residue chain is tRNA pseudouridine synthase D (346 aa).

Asp-81 acts as the Nucleophile in catalysis. The TRUD domain maps to 157-303 (GVPNYFGLQR…MKHERRILRL (147 aa)).

The protein belongs to the pseudouridine synthase TruD family.

It carries out the reaction uridine(13) in tRNA = pseudouridine(13) in tRNA. Its function is as follows. Responsible for synthesis of pseudouridine from uracil-13 in transfer RNAs. This Stutzerimonas stutzeri (strain A1501) (Pseudomonas stutzeri) protein is tRNA pseudouridine synthase D.